A 134-amino-acid polypeptide reads, in one-letter code: Profilin-1 (134 aa).

A disulfide bridge links cysteine 13 with cysteine 118. The Involved in PIP2 interaction signature appears at 84–100; that stretch reads AVIRGKKGSGGITIKKT. A Phosphothreonine modification is found at threonine 114.

This sequence belongs to the profilin family. Occurs in many kinds of cells as a complex with monomeric actin in a 1:1 ratio. Post-translationally, phosphorylated by MAP kinases.

The protein resides in the cytoplasm. It localises to the cytoskeleton. Its function is as follows. Binds to actin and affects the structure of the cytoskeleton. At high concentrations, profilin prevents the polymerization of actin, whereas it enhances it at low concentrations. This chain is Profilin-1, found in Olea europaea (Common olive).